Consider the following 613-residue polypeptide: Penicillin-binding protein activator LpoA (613 aa).

Residues 1 to 29 (MNSMLNFTHKRKSVSRLLAPVALAVILAG) form the signal peptide. The N-palmitoyl cysteine moiety is linked to residue cysteine 30. Cysteine 30 is lipidated: S-diacylglycerol cysteine.

This sequence belongs to the LpoA family. As to quaternary structure, interacts with PBP1a.

It is found in the cell outer membrane. Its function is as follows. Regulator of peptidoglycan synthesis that is essential for the function of penicillin-binding protein 1A (PBP1a). The protein is Penicillin-binding protein activator LpoA of Photobacterium profundum (strain SS9).